We begin with the raw amino-acid sequence, 134 residues long: MARVKRGVTSHAKHKKTLKAAKGFYGRRKNTIRAAKAAVDRSKQFAYRDRKVNKRNFRALWIQRINAAVREFGLTYGRFIDGLNKAGIEVDRKVLSDMAIHEPAAFGALVEASKKALAYLKDAGTANEFESAVR.

It belongs to the bacterial ribosomal protein bL20 family.

Functionally, binds directly to 23S ribosomal RNA and is necessary for the in vitro assembly process of the 50S ribosomal subunit. It is not involved in the protein synthesizing functions of that subunit. This is Large ribosomal subunit protein bL20 from Sinorhizobium medicae (strain WSM419) (Ensifer medicae).